The chain runs to 364 residues: 3-isopropylmalate dehydrogenase (364 aa).

Residue 78–91 coordinates NAD(+); the sequence is GKKWDYLSIDKRPE. The substrate site is built by Arg99, Arg109, Arg138, and Asp227. Mg(2+) is bound by residues Asp227, Asp251, and Asp255. 285-297 is an NAD(+) binding site; sequence GSAPDIAGKNIAN.

Belongs to the isocitrate and isopropylmalate dehydrogenases family. LeuB type 1 subfamily. In terms of assembly, homodimer. It depends on Mg(2+) as a cofactor. Mn(2+) serves as cofactor.

It localises to the cytoplasm. The catalysed reaction is (2R,3S)-3-isopropylmalate + NAD(+) = 4-methyl-2-oxopentanoate + CO2 + NADH. It functions in the pathway amino-acid biosynthesis; L-leucine biosynthesis; L-leucine from 3-methyl-2-oxobutanoate: step 3/4. Catalyzes the oxidation of 3-carboxy-2-hydroxy-4-methylpentanoate (3-isopropylmalate) to 3-carboxy-4-methyl-2-oxopentanoate. The product decarboxylates to 4-methyl-2 oxopentanoate. The chain is 3-isopropylmalate dehydrogenase from Buchnera aphidicola subsp. Uroleucon erigeronensis.